A 446-amino-acid polypeptide reads, in one-letter code: Tripartite motif-containing protein 43B (446 aa).

The segment at cysteine 15–arginine 56 adopts an RING-type zinc-finger fold. A B box-type zinc finger spans residues serine 88–isoleucine 129. Zn(2+) is bound by residues cysteine 93, histidine 96, cysteine 115, and histidine 121. Coiled-coil stretches lie at residues isoleucine 129–leucine 158 and leucine 190–aspartate 220. Positions glutamate 269–arginine 446 constitute a B30.2/SPRY domain.

This sequence belongs to the TRIM/RBCC family.

The protein is Tripartite motif-containing protein 43B (TRIM43B) of Homo sapiens (Human).